The chain runs to 178 residues: UPF0114 protein in repA1-repA2 intergenic region (178 aa).

3 consecutive transmembrane segments (helical) span residues 14-34 (WLIF…TLKF), 53-73 (LILV…LVMV), and 136-156 (WYVI…YIDR).

The protein belongs to the UPF0114 family.

Its subcellular location is the cell membrane. This is UPF0114 protein in repA1-repA2 intergenic region from Buchnera aphidicola subsp. Tetraneura caerulescens.